Reading from the N-terminus, the 967-residue chain is uncharacterized protein (967 aa).

Positions methionine 1–alanine 29 are cleaved as a signal peptide. 2 consecutive BIG2 domains span residues threonine 38–serine 107 and leucine 133–glycine 190.

This is an uncharacterized protein from Clostridium acetobutylicum (strain ATCC 824 / DSM 792 / JCM 1419 / IAM 19013 / LMG 5710 / NBRC 13948 / NRRL B-527 / VKM B-1787 / 2291 / W).